A 617-amino-acid chain; its full sequence is tRNA 5-methylaminomethyl-2-thiouridine biosynthesis bifunctional protein MnmC (617 aa).

The segment at 1 to 226 is tRNA (mnm(5)s(2)U34)-methyltransferase; the sequence is MLDWQNGQLY…KREMLQGDLP (226 aa). Positions 241–617 are FAD-dependent cmnm(5)s(2)U34 oxidoreductase; the sequence is IGGGIAGCAA…SPAIPVSIKG (377 aa).

The protein in the N-terminal section; belongs to the methyltransferase superfamily. tRNA (mnm(5)s(2)U34)-methyltransferase family. This sequence in the C-terminal section; belongs to the DAO family. Requires FAD as cofactor.

The protein resides in the cytoplasm. The enzyme catalyses 5-aminomethyl-2-thiouridine(34) in tRNA + S-adenosyl-L-methionine = 5-methylaminomethyl-2-thiouridine(34) in tRNA + S-adenosyl-L-homocysteine + H(+). In terms of biological role, catalyzes the last two steps in the biosynthesis of 5-methylaminomethyl-2-thiouridine (mnm(5)s(2)U) at the wobble position (U34) in tRNA. Catalyzes the FAD-dependent demodification of cmnm(5)s(2)U34 to nm(5)s(2)U34, followed by the transfer of a methyl group from S-adenosyl-L-methionine to nm(5)s(2)U34, to form mnm(5)s(2)U34. The polypeptide is tRNA 5-methylaminomethyl-2-thiouridine biosynthesis bifunctional protein MnmC (Nitrosospira multiformis (strain ATCC 25196 / NCIMB 11849 / C 71)).